Consider the following 64-residue polypeptide: Protein YnhH (64 aa).

This chain is Protein YnhH, found in Escherichia coli (strain K12).